Consider the following 132-residue polypeptide: S-protein homolog 8 (132 aa).

A signal peptide spans methionine 1–glycine 20.

Belongs to the plant self-incompatibility (S1) protein family. Mostly expressed in seedlings, stems, leaves and floral tissues, and, to a lower extent, in roots.

The protein resides in the secreted. This chain is S-protein homolog 8, found in Arabidopsis thaliana (Mouse-ear cress).